A 317-amino-acid polypeptide reads, in one-letter code: Ribosomal RNA large subunit methyltransferase F (317 aa).

It belongs to the methyltransferase superfamily. METTL16/RlmF family.

The protein localises to the cytoplasm. The catalysed reaction is adenosine(1618) in 23S rRNA + S-adenosyl-L-methionine = N(6)-methyladenosine(1618) in 23S rRNA + S-adenosyl-L-homocysteine + H(+). Specifically methylates the adenine in position 1618 of 23S rRNA. This chain is Ribosomal RNA large subunit methyltransferase F, found in Pseudomonas putida (strain ATCC 47054 / DSM 6125 / CFBP 8728 / NCIMB 11950 / KT2440).